The chain runs to 134 residues: Phosphoribosyl-ATP pyrophosphatase 2 (134 aa).

It belongs to the PRA-PH family.

Its subcellular location is the cytoplasm. The catalysed reaction is 1-(5-phospho-beta-D-ribosyl)-ATP + H2O = 1-(5-phospho-beta-D-ribosyl)-5'-AMP + diphosphate + H(+). Its pathway is amino-acid biosynthesis; L-histidine biosynthesis; L-histidine from 5-phospho-alpha-D-ribose 1-diphosphate: step 2/9. In Bradyrhizobium diazoefficiens (strain JCM 10833 / BCRC 13528 / IAM 13628 / NBRC 14792 / USDA 110), this protein is Phosphoribosyl-ATP pyrophosphatase 2 (hisE2).